A 66-amino-acid polypeptide reads, in one-letter code: Large ribosomal subunit protein bL35 (66 aa).

It belongs to the bacterial ribosomal protein bL35 family.

This is Large ribosomal subunit protein bL35 from Brucella canis (strain ATCC 23365 / NCTC 10854 / RM-666).